Reading from the N-terminus, the 158-residue chain is NAD(P)H-quinone oxidoreductase subunit J, chloroplastic (158 aa).

It belongs to the complex I 30 kDa subunit family. NDH is composed of at least 16 different subunits, 5 of which are encoded in the nucleus.

It localises to the plastid. Its subcellular location is the chloroplast thylakoid membrane. The catalysed reaction is a plastoquinone + NADH + (n+1) H(+)(in) = a plastoquinol + NAD(+) + n H(+)(out). It catalyses the reaction a plastoquinone + NADPH + (n+1) H(+)(in) = a plastoquinol + NADP(+) + n H(+)(out). NDH shuttles electrons from NAD(P)H:plastoquinone, via FMN and iron-sulfur (Fe-S) centers, to quinones in the photosynthetic chain and possibly in a chloroplast respiratory chain. The immediate electron acceptor for the enzyme in this species is believed to be plastoquinone. Couples the redox reaction to proton translocation, and thus conserves the redox energy in a proton gradient. The chain is NAD(P)H-quinone oxidoreductase subunit J, chloroplastic from Capsella bursa-pastoris (Shepherd's purse).